The chain runs to 281 residues: Phosphatidylglycerol--prolipoprotein diacylglyceryl transferase (281 aa).

Transmembrane regions (helical) follow at residues 11–31 (IIFT…VISF), 57–77 (LLYS…IIFY), 89–109 (VFYI…AIIV), 121–141 (ILEI…AGRI), 194–214 (PTQL…IYFF), 222–242 (GSIS…IEFF), and 255–275 (IITM…IIMY). A 1,2-diacyl-sn-glycero-3-phospho-(1'-sn-glycerol) is bound at residue R140.

Belongs to the Lgt family.

It is found in the cell inner membrane. It catalyses the reaction L-cysteinyl-[prolipoprotein] + a 1,2-diacyl-sn-glycero-3-phospho-(1'-sn-glycerol) = an S-1,2-diacyl-sn-glyceryl-L-cysteinyl-[prolipoprotein] + sn-glycerol 1-phosphate + H(+). The protein operates within protein modification; lipoprotein biosynthesis (diacylglyceryl transfer). Its function is as follows. Catalyzes the transfer of the diacylglyceryl group from phosphatidylglycerol to the sulfhydryl group of the N-terminal cysteine of a prolipoprotein, the first step in the formation of mature lipoproteins. This Buchnera aphidicola subsp. Acyrthosiphon pisum (strain 5A) protein is Phosphatidylglycerol--prolipoprotein diacylglyceryl transferase.